A 245-amino-acid polypeptide reads, in one-letter code: Platelet-derived growth factor subunit B (245 aa).

Residues 1–20 form the signal peptide; the sequence is MNRCWALFLSLCCYLRLVSA. Residues 21 to 81 constitute a propeptide, removed in mature form; sequence EGDPIPEELY…ELESLSRGRR (61 aa). Asn63 carries N-linked (GlcNAc...) asparagine glycosylation. Intrachain disulfides connect Cys101–Cys145, Cys134–Cys182, and Cys138–Cys184. Residues 195–245 constitute a propeptide, removed in mature form; the sequence is RSPGSSQEQRARTPQTRVTIRTVRVRRPPKGKHQKFKHTHDKKALKETLGA. Positions 220 to 235 are enriched in basic residues; sequence RRPPKGKHQKFKHTHD. Residues 220-245 are disordered; the sequence is RRPPKGKHQKFKHTHDKKALKETLGA. The segment covering 236–245 has biased composition (basic and acidic residues); it reads KKALKETLGA.

This sequence belongs to the PDGF/VEGF growth factor family. In terms of assembly, antiparallel homodimer; disulfide-linked. Antiparallel heterodimer with PDGFA; disulfide-linked. The PDGFB homodimer interacts with PDGFRA and PDGFRB homodimers, and with heterodimers formed by PDGFRA and PDGFRB. The heterodimer composed of PDGFA and PDGFB interacts with PDGFRB homodimers, and with heterodimers formed by PDGFRA and PDGFRB. Interacts with XLKD1. Interacts with LRP1. Interacts with SORL1 (via the N-terminal ectodomain). Interacts with CD82; this interaction inhibits PDGFB-mediated signaling pathway.

It is found in the secreted. Its function is as follows. Growth factor that plays an essential role in the regulation of embryonic development, cell proliferation, cell migration, survival and chemotaxis. Potent mitogen for cells of mesenchymal origin. Required for normal proliferation and recruitment of pericytes and vascular smooth muscle cells in the central nervous system, skin, lung, heart and placenta. Required for normal blood vessel development, and for normal development of kidney glomeruli. Plays an important role in wound healing. Signaling is modulated by the formation of heterodimers with PDGFA. The polypeptide is Platelet-derived growth factor subunit B (PDGFB) (Felis catus (Cat)).